Consider the following 457-residue polypeptide: Cysteine--tRNA ligase (457 aa).

Cys28 is a binding site for Zn(2+). Positions 30-40 match the 'HIGH' region motif; the sequence is PTVYDTAHIGN. Zn(2+) contacts are provided by Cys212, His237, and Glu241. Positions 270-274 match the 'KMSKS' region motif; the sequence is KMSKS. Position 273 (Lys273) interacts with ATP.

This sequence belongs to the class-I aminoacyl-tRNA synthetase family. Monomer. The cofactor is Zn(2+).

The protein localises to the cytoplasm. It carries out the reaction tRNA(Cys) + L-cysteine + ATP = L-cysteinyl-tRNA(Cys) + AMP + diphosphate. In Wolbachia sp. subsp. Drosophila simulans (strain wRi), this protein is Cysteine--tRNA ligase.